Reading from the N-terminus, the 125-residue chain is Large ribosomal subunit protein bL12 (125 aa).

Belongs to the bacterial ribosomal protein bL12 family. Homodimer. Part of the ribosomal stalk of the 50S ribosomal subunit. Forms a multimeric L10(L12)X complex, where L10 forms an elongated spine to which 2 to 4 L12 dimers bind in a sequential fashion. Binds GTP-bound translation factors.

Functionally, forms part of the ribosomal stalk which helps the ribosome interact with GTP-bound translation factors. Is thus essential for accurate translation. The protein is Large ribosomal subunit protein bL12 of Ruegeria sp. (strain TM1040) (Silicibacter sp.).